Reading from the N-terminus, the 139-residue chain is Putative pre-16S rRNA nuclease (139 aa).

This sequence belongs to the YqgF nuclease family.

It localises to the cytoplasm. Its function is as follows. Could be a nuclease involved in processing of the 5'-end of pre-16S rRNA. The protein is Putative pre-16S rRNA nuclease of Rippkaea orientalis (strain PCC 8801 / RF-1) (Cyanothece sp. (strain PCC 8801)).